A 1077-amino-acid polypeptide reads, in one-letter code: METSKNPSDLPKKPANVKKNRRRFQKSQKKSISPSSGSELPNFKTTISQNNEEVKTSLKEDSSKFHPSASAPIFVPTSSVQLNVSKNNGHKASDIVDAVSSKDEELRKHAKGEGKRSKNRKRSSKHSEKQAVDLKSSNSSQETSSSKGSVNNKSERSREAKSRMPKNSKEIKKGLDLSKLDMTSRMIVELKNRLYECSVCTDTINPSTSIWSCGTCYHVFHLSCIRKWCKNSIEQRNEDAWRCPYCQSNQTETSLHYLCWCGKQEKPEFVKNLVPHSCGDPCGKTRGQDCEHPCPLLCHPGPCPPCTATVEKFCLCGKESIHARCSNISKVNTEPFRCENVCDELLPCGEHTCKKRCHSGLCGACFEPINAKCYCGLHSKTYPCSSLPSPSISKKDENGSVKEWFGYYSCNNPCTLFFDCGLHKCSKTCHPISETRAHCPFATDVLTKCPCGKEDISFLLKGHERKSCSDPIPTCENICGKLLSCGHRCKYKCHLGSCGTCSETLTIPCRCTANEVQVTCEQLQNGFIPTCERLCTILLSCGRHQCNKKCCSGYSKAQTRLARRPKGAKLRYHLLTEEFEEEHICFRPCNKKLSCGNHFCQHMCHRGPCPRCLEASFEELPCTCGRTRLYPPVACGTPIPDCPYLCVLPKSCHHPQVKHNCHPTSEPCPPCPYFVKKRCLCGKHILENQPCYRENVRCGELCNKLLSCKTHFCEKLCHPDGECESSCKKECGKRRMYCEHVCQSPCHAGHPCDERIPCKAPLEVSCECGRIRKKVTCDASYDNPDPQHKVSCTLECSQQQRNKLFAEALNIKTDRRSNDVAQYTKSLLVFYGKHSDFADEVESLLRNFVNNKASSFRFPSMRREQRAFVHMFAKLLGLESVSFDPEPKRNVMVYNKGEAKLPNMLLKEANLYHLQHPEIPLKPDSLLGPEEENATASHIDGSSNASDSGYNAFVLKELLKEVNDESAIFSVLDDIVDFNHLTWSILFGENYIILKPLNTDLIVNKTGKLVALRPLVNRRLADAGIASRCEICEINDKNEIVKTRSQRIHSKKKAFLSLVPDKSIGVINRYKELATEL.

Residues 1-173 (METSKNPSDL…MPKNSKEIKK (173 aa)) are disordered. Basic residues predominate over residues 15–29 (ANVKKNRRRFQKSQK). S33 bears the Phosphoserine mark. Over residues 52–64 (EEVKTSLKEDSSK) the composition is skewed to basic and acidic residues. A compositionally biased stretch (polar residues) spans 76 to 87 (PTSSVQLNVSKN). Residues 100–116 (SSKDEELRKHAKGEGKR) are compositionally biased toward basic and acidic residues. A compositionally biased stretch (low complexity) spans 136-149 (SSNSSQETSSSKGS). The span at 153–173 (KSERSREAKSRMPKNSKEIKK) shows a compositional bias: basic and acidic residues. Residues 197–247 (CSVCTDTINPSTSIWSCGTCYHVFHLSCIRKWCKNSIEQRNEDAWRCPYCQ) form an RING-type; atypical zinc finger. NF-X1-type zinc fingers lie at residues 290-308 (CEHP…PCTA), 348-367 (CGEH…ACFE), 420-441 (CGLH…HCPF), 485-503 (CGHR…TCSE), 541-558 (CGRH…SKAQ), 595-614 (CGNH…RCLE), 708-729 (CKTH…SCKK), and 738-760 (CEHV…PCKA). The R3H domain maps to 835–897 (SDFADEVESL…KRNVMVYNKG (63 aa)).

This sequence belongs to the NFX1 family.

Its subcellular location is the cytoplasm. The protein resides in the golgi apparatus. The protein localises to the nucleus. Functionally, may play a role in transcription regulation. This chain is FKBP12-associated protein 1 homolog (fap1), found in Schizosaccharomyces pombe (strain 972 / ATCC 24843) (Fission yeast).